A 336-amino-acid polypeptide reads, in one-letter code: Protease HtpX homolog (336 aa).

Transmembrane regions (helical) follow at residues 7–24 (AMLL…GFLI) and 29–48 (GMMI…YWNA). Histidine 130 serves as a coordination point for Zn(2+). Glutamate 131 is a catalytic residue. Residue histidine 134 participates in Zn(2+) binding. 2 consecutive transmembrane segments (helical) span residues 145 to 165 (IVAT…FLGG) and 171 to 191 (PFGF…AMIV). Glutamate 200 serves as a coordination point for Zn(2+). A compositionally biased stretch (low complexity) spans 278–287 (QQMAGGTQAA). The segment at 278 to 336 (QQMAGGTQAAPRPTPRQAGEQQPSGPWGQAPQAEQPAEPERPKANPWGRNPTGPKGRWS) is disordered.

This sequence belongs to the peptidase M48B family. It depends on Zn(2+) as a cofactor.

Its subcellular location is the cell inner membrane. The polypeptide is Protease HtpX homolog (Mesorhizobium japonicum (strain LMG 29417 / CECT 9101 / MAFF 303099) (Mesorhizobium loti (strain MAFF 303099))).